The sequence spans 65 residues: uncharacterized protein (65 aa).

This is an uncharacterized protein from Thermoproteus tenax (TTV1).